Here is a 547-residue protein sequence, read N- to C-terminus: Glucose-6-phosphate isomerase 2 (547 aa).

The Proton donor role is filled by Glu351. Catalysis depends on residues His382 and Lys508.

It belongs to the GPI family.

It is found in the cytoplasm. The enzyme catalyses alpha-D-glucose 6-phosphate = beta-D-fructose 6-phosphate. Its pathway is carbohydrate biosynthesis; gluconeogenesis. The protein operates within carbohydrate degradation; glycolysis; D-glyceraldehyde 3-phosphate and glycerone phosphate from D-glucose: step 2/4. In terms of biological role, catalyzes the reversible isomerization of glucose-6-phosphate to fructose-6-phosphate. The sequence is that of Glucose-6-phosphate isomerase 2 from Neisseria gonorrhoeae (strain ATCC 700825 / FA 1090).